The sequence spans 370 residues: Biotin synthase (370 aa).

A Radical SAM core domain is found at 50-276; the sequence is FSDGTVDACS…IAVYRFLHPE (227 aa). Residues C68, C72, and C75 each contribute to the [4Fe-4S] cluster site. [2Fe-2S] cluster is bound by residues C208 and R280. A disordered region spans residues 328 to 370; sequence AGLEPNREANTFDPESVKARHRSPAAETASNANRTNATTETDD. The span at 352 to 370 shows a compositional bias: low complexity; that stretch reads AAETASNANRTNATTETDD.

Belongs to the radical SAM superfamily. Biotin synthase family. In terms of assembly, homodimer. Requires [4Fe-4S] cluster as cofactor. [2Fe-2S] cluster serves as cofactor.

It catalyses the reaction (4R,5S)-dethiobiotin + (sulfur carrier)-SH + 2 reduced [2Fe-2S]-[ferredoxin] + 2 S-adenosyl-L-methionine = (sulfur carrier)-H + biotin + 2 5'-deoxyadenosine + 2 L-methionine + 2 oxidized [2Fe-2S]-[ferredoxin]. It functions in the pathway cofactor biosynthesis; biotin biosynthesis; biotin from 7,8-diaminononanoate: step 2/2. Its function is as follows. Catalyzes the conversion of dethiobiotin (DTB) to biotin by the insertion of a sulfur atom into dethiobiotin via a radical-based mechanism. The polypeptide is Biotin synthase (Natronomonas pharaonis (strain ATCC 35678 / DSM 2160 / CIP 103997 / JCM 8858 / NBRC 14720 / NCIMB 2260 / Gabara) (Halobacterium pharaonis)).